A 291-amino-acid chain; its full sequence is Isopentenyl-diphosphate Delta-isomerase I, chloroplastic (291 aa).

Residues 1 to 52 constitute a chloroplast transit peptide; the sequence is MSTASLFSFPSFHLRSLLPSLSSSSSSSSSRFAPPRLSPIRSPAPRTQLSVR. Serine 2 bears the N-acetylthreonine mark. The span at 20 to 39 shows a compositional bias: low complexity; it reads SLSSSSSSSSSRFAPPRLSP. Residues 20 to 43 are disordered; that stretch reads SLSSSSSSSSSRFAPPRLSPIRSP. Lysine 95 lines the substrate pocket. Positions 99 and 111 each coordinate Mg(2+). Residues 109–261 enclose the Nudix hydrolase domain; the sequence is LLHRAFSVFL…AVKLSPWFRL (153 aa). Residues arginine 130 and lysine 134 each contribute to the substrate site. Residue cysteine 146 is part of the active site. Substrate is bound at residue serine 147. Positions 147 to 177 match the Nudix box motif; sequence SHPLYRESELIEENVLGVRNAAQRKLFDELG. Mg(2+) contacts are provided by glutamate 206 and glutamate 208. The active site involves glutamate 208.

The protein belongs to the IPP isomerase type 1 family. Mg(2+) serves as cofactor.

It localises to the plastid. The protein resides in the chloroplast. The protein localises to the cytoplasm. It catalyses the reaction isopentenyl diphosphate = dimethylallyl diphosphate. It participates in isoprenoid biosynthesis; dimethylallyl diphosphate biosynthesis; dimethylallyl diphosphate from isopentenyl diphosphate: step 1/1. It functions in the pathway porphyrin-containing compound metabolism; chlorophyll biosynthesis. Functionally, catalyzes the 1,3-allylic rearrangement of the homoallylic substrate isopentenyl (IPP) to its highly electrophilic allylic isomer, dimethylallyl diphosphate (DMAPP). This chain is Isopentenyl-diphosphate Delta-isomerase I, chloroplastic (IPP1), found in Arabidopsis thaliana (Mouse-ear cress).